A 438-amino-acid chain; its full sequence is uncharacterized protein (438 aa).

Residue His59 coordinates Zn(2+). Residue Glu62 is the Proton acceptor of the active site. Zn(2+) is bound by residues His63 and Glu139.

It belongs to the peptidase M16 family. Zn(2+) is required as a cofactor.

This is an uncharacterized protein from Mycobacterium bovis (strain ATCC BAA-935 / AF2122/97).